Here is a 361-residue protein sequence, read N- to C-terminus: Peptide chain release factor 1 (361 aa).

The residue at position 236 (glutamine 236) is an N5-methylglutamine. Positions 286 to 306 (AADSQRAEARKGQVGSGDRSE) are disordered.

It belongs to the prokaryotic/mitochondrial release factor family. In terms of processing, methylated by PrmC. Methylation increases the termination efficiency of RF1.

The protein resides in the cytoplasm. Its function is as follows. Peptide chain release factor 1 directs the termination of translation in response to the peptide chain termination codons UAG and UAA. The protein is Peptide chain release factor 1 of Magnetococcus marinus (strain ATCC BAA-1437 / JCM 17883 / MC-1).